The chain runs to 354 residues: Squamosa promoter-binding-like protein 15 (354 aa).

The segment at 1-25 is disordered; sequence MELLMCSGQAESGGSSSTESSSLSG. Residues 7 to 25 show a composition bias toward low complexity; it reads SGQAESGGSSSTESSSLSG. The SBP-type zinc-finger motif lies at 56–133; sequence TARCQVEGCR…ACHNERRRKP (78 aa). Zn(2+) contacts are provided by Cys59, Cys64, Cys81, His84, Cys100, Cys103, His107, and Cys119. The short motif at 116 to 132 is the Bipartite nuclear localization signal element; the sequence is KRSCRRRLACHNERRRK.

It depends on Zn(2+) as a cofactor.

It localises to the nucleus. Its function is as follows. Trans-acting factor that binds specifically to the consensus nucleotide sequence 5'-TNCGTACAA-3'. In Arabidopsis thaliana (Mouse-ear cress), this protein is Squamosa promoter-binding-like protein 15 (SPL15).